A 66-amino-acid polypeptide reads, in one-letter code: Toxin NaTx-4 (66 aa).

Positions 1–64 (KEGYLVNKET…TFPIPGKTCS (64 aa)) constitute an LCN-type CS-alpha/beta domain. Cystine bridges form between cysteine 12-cysteine 63, cysteine 16-cysteine 39, cysteine 25-cysteine 44, and cysteine 29-cysteine 46.

It belongs to the long (4 C-C) scorpion toxin superfamily. Sodium channel inhibitor family. As to expression, expressed by the venom gland.

It is found in the secreted. In terms of biological role, probable sodium channel inhibitor. This is Toxin NaTx-4 from Centruroides sculpturatus (Arizona bark scorpion).